The primary structure comprises 127 residues: Large ribosomal subunit protein bL19 (127 aa).

It belongs to the bacterial ribosomal protein bL19 family.

This protein is located at the 30S-50S ribosomal subunit interface and may play a role in the structure and function of the aminoacyl-tRNA binding site. The polypeptide is Large ribosomal subunit protein bL19 (Synechococcus sp. (strain JA-3-3Ab) (Cyanobacteria bacterium Yellowstone A-Prime)).